The following is a 92-amino-acid chain: Small ribosomal subunit protein uS19 (92 aa).

Belongs to the universal ribosomal protein uS19 family.

Protein S19 forms a complex with S13 that binds strongly to the 16S ribosomal RNA. This Aliivibrio salmonicida (strain LFI1238) (Vibrio salmonicida (strain LFI1238)) protein is Small ribosomal subunit protein uS19.